The chain runs to 135 residues: UPF0251 protein Hore_18270 (135 aa).

Belongs to the UPF0251 family.

In Halothermothrix orenii (strain H 168 / OCM 544 / DSM 9562), this protein is UPF0251 protein Hore_18270.